A 336-amino-acid polypeptide reads, in one-letter code: Phosphate acyltransferase (336 aa).

This sequence belongs to the PlsX family. As to quaternary structure, homodimer. Probably interacts with PlsY.

It is found in the cytoplasm. It carries out the reaction a fatty acyl-[ACP] + phosphate = an acyl phosphate + holo-[ACP]. It functions in the pathway lipid metabolism; phospholipid metabolism. Catalyzes the reversible formation of acyl-phosphate (acyl-PO(4)) from acyl-[acyl-carrier-protein] (acyl-ACP). This enzyme utilizes acyl-ACP as fatty acyl donor, but not acyl-CoA. The protein is Phosphate acyltransferase of Pseudomonas fluorescens (strain Pf0-1).